The chain runs to 500 residues: Beta-xylosidase (500 aa).

Glu-160 functions as the Proton donor in the catalytic mechanism. Catalysis depends on Glu-277, which acts as the Nucleophile.

This sequence belongs to the glycosyl hydrolase 39 family.

The enzyme catalyses Hydrolysis of (1-&gt;4)-beta-D-xylans, to remove successive D-xylose residues from the non-reducing termini.. This is Beta-xylosidase (xynB) from Thermoanaerobacterium saccharolyticum (strain DSM 8691 / JW/SL-YS485).